We begin with the raw amino-acid sequence, 539 residues long: Tetracenomycin B2 monooxygenase-dioxygenase (539 aa).

Residues leucine 15, glutamate 35, glutamine 128, and leucine 152 each coordinate FAD. The active-site Proton acceptor is tyrosine 231. Aspartate 313 contributes to the FAD binding site.

The protein belongs to the PheA/TfdB FAD monooxygenase family. Requires FAD as cofactor.

The catalysed reaction is tetracenomycin B2 + 2 NADPH + 2 O2 + 2 H(+) = 8-demethyltetracenomycin C + 2 NADP(+) + H2O. The enzyme catalyses tetracenomycin A2 + 2 NADPH + 2 O2 + 2 H(+) = tetracenomycin C + 2 NADP(+) + H2O. Its pathway is antibiotic biosynthesis. In terms of biological role, involved in the biosynthesis of elloramycin, an antitumor polyketide. In vivo, probably catalyzes the triple hydroxylation of 8-demethyltetracenomycin A2 (tetracenomycin B2) at positions C-4, C-4a and C-12a to give 8-demethyltetracenomycin C (8-DMTC). In vitro, catalyzes the triple hydroxylation of tetracenomycin A2 (TCM A2) to give tetracenomycin C (TCM C). Uses NADPH as an electron donor and requires molecular O(2). The chain is Tetracenomycin B2 monooxygenase-dioxygenase from Streptomyces olivaceus.